The sequence spans 316 residues: 4-hydroxy-3-methylbut-2-enyl diphosphate reductase (316 aa).

[4Fe-4S] cluster is bound at residue cysteine 12. Residues histidine 41 and histidine 74 each contribute to the (2E)-4-hydroxy-3-methylbut-2-enyl diphosphate site. Residues histidine 41 and histidine 74 each coordinate dimethylallyl diphosphate. Isopentenyl diphosphate is bound by residues histidine 41 and histidine 74. Cysteine 96 lines the [4Fe-4S] cluster pocket. Histidine 124 contributes to the (2E)-4-hydroxy-3-methylbut-2-enyl diphosphate binding site. Residue histidine 124 coordinates dimethylallyl diphosphate. Histidine 124 serves as a coordination point for isopentenyl diphosphate. Glutamate 126 functions as the Proton donor in the catalytic mechanism. A (2E)-4-hydroxy-3-methylbut-2-enyl diphosphate-binding site is contributed by threonine 167. Cysteine 197 lines the [4Fe-4S] cluster pocket. Residues serine 225, serine 226, asparagine 227, and serine 269 each contribute to the (2E)-4-hydroxy-3-methylbut-2-enyl diphosphate site. Dimethylallyl diphosphate contacts are provided by serine 225, serine 226, asparagine 227, and serine 269. Isopentenyl diphosphate-binding residues include serine 225, serine 226, asparagine 227, and serine 269.

It belongs to the IspH family. In terms of assembly, homodimer. Requires [4Fe-4S] cluster as cofactor.

It carries out the reaction isopentenyl diphosphate + 2 oxidized [2Fe-2S]-[ferredoxin] + H2O = (2E)-4-hydroxy-3-methylbut-2-enyl diphosphate + 2 reduced [2Fe-2S]-[ferredoxin] + 2 H(+). The catalysed reaction is dimethylallyl diphosphate + 2 oxidized [2Fe-2S]-[ferredoxin] + H2O = (2E)-4-hydroxy-3-methylbut-2-enyl diphosphate + 2 reduced [2Fe-2S]-[ferredoxin] + 2 H(+). The protein operates within isoprenoid biosynthesis; dimethylallyl diphosphate biosynthesis; dimethylallyl diphosphate from (2E)-4-hydroxy-3-methylbutenyl diphosphate: step 1/1. Its pathway is isoprenoid biosynthesis; isopentenyl diphosphate biosynthesis via DXP pathway; isopentenyl diphosphate from 1-deoxy-D-xylulose 5-phosphate: step 6/6. Functionally, catalyzes the conversion of 1-hydroxy-2-methyl-2-(E)-butenyl 4-diphosphate (HMBPP) into a mixture of isopentenyl diphosphate (IPP) and dimethylallyl diphosphate (DMAPP). Acts in the terminal step of the DOXP/MEP pathway for isoprenoid precursor biosynthesis. This chain is 4-hydroxy-3-methylbut-2-enyl diphosphate reductase, found in Sodalis glossinidius (strain morsitans).